The following is a 115-amino-acid chain: Protein E6A (115 aa).

The signal sequence occupies residues 1–25 (MTDKFYFYGLFWGILLFVFLQHMQG).

This is Protein E6A (12) from Equine herpesvirus 2 (strain 86/87) (EHV-2).